The chain runs to 119 residues: MDLKSRAETFLTTIVNRRETASIEHYLHPDAQFKHNDLPSMSTAELLAFWPQVLDESPDFRVQILATIAEGLRVWVYSRVEGRLGKGVMDDVHMLEFDGNGLLIRSRGIQREVVEEMEK.

This sequence belongs to the aurE cyclase family.

It participates in mycotoxin biosynthesis. Functionally, probable cyclase; part of the gene cluster that mediates the biosynthesis of ochratoxin A (OTA), a mycotoxin composed of a chlorinated type I polyketide dihydroisocoumarin moiety linked to L-phenylalanine, and demonstrated to have nephrotoxic, immunotoxic, genotoxic, neurotoxic, and teratogenic properties. OtaY is probably involved in the polyketide cyclization. The pathway begins with the highly reducing polyketide synthase otaA that catalyzes the formation of the isocoumarin group during the initial stages of biosynthesis, starting from one acetate and 4 malonate units, to originate the characteristic pentaketide skeleton 7-methylmellein (7-MM) of the OTA molecule. The newly identified cyclase otaY might be involved in the polyketide cyclization reaction during the initial steps of the OTA biosynthesis. 7-MM is then oxidized into 7-carboxymellein (also called ochratoxin beta) by the cytochrome P450 monooxygenase otaC. The NRPS encoded by the otaB gene is involved in the linking of phenylalanine to the dihydroisocoumarin ring. The reaction catalyzed by NRPS results in the production of ochratoxin B (OTB), which is the non-chlorinated analog of OTA and which subsequently serves as the substrate of the halogenase otaD for chlorination activity to form the final molecular structure of OTA, containing a chlorine atom in the C-5 position of the molecule. This chain is Probable cyclase otaY, found in Aspergillus niger (strain ATCC MYA-4892 / CBS 513.88 / FGSC A1513).